The sequence spans 595 residues: Beta-(1--&gt;2)glucan export ATP-binding/permease protein NdvA (595 aa).

Positions 21 to 301 (SLLICSANVM…MSNFINLTIS (281 aa)) constitute an ABC transmembrane type-1 domain. 5 consecutive transmembrane segments (helical) span residues 22 to 42 (LLICSANVMLAIITIAEPILF), 55 to 75 (IIPTLTIWVCFGISHILAYVL), 129 to 149 (IWLDFMRQHLSTLVALFVLIP), 152 to 172 (FNMNWRLSIVLVVLAIIYVLI), and 248 to 268 (MASTISIVCVLLLGAFFVAKG). The 235-residue stretch at 335-569 (IQFHHVTYKF…GGRFYKLLKA (235 aa)) folds into the ABC transporter domain. 368-375 (GPTGAGKT) serves as a coordination point for ATP.

The protein belongs to the ABC transporter superfamily. Beta-(1--&gt;2)glucan exporter (TC 3.A.1.108.1) family. As to quaternary structure, homodimer.

It localises to the cell inner membrane. The catalysed reaction is [(1-&gt;2)-beta-D-glucosyl](n)(in) + ATP + H2O = [(1-&gt;2)-beta-D-glucosyl](n)(out) + ADP + phosphate + H(+). In terms of biological role, involved in beta-(1--&gt;2)glucan export. Transmembrane domains (TMD) form a pore in the inner membrane and the ATP-binding domain (NBD) is responsible for energy generation. The polypeptide is Beta-(1--&gt;2)glucan export ATP-binding/permease protein NdvA (Bartonella henselae (strain ATCC 49882 / DSM 28221 / CCUG 30454 / Houston 1) (Rochalimaea henselae)).